Here is a 140-residue protein sequence, read N- to C-terminus: Active regulator of SIRT1 (140 aa).

Disordered regions lie at residues 1-52 (MSAS…KNKA) and 95-123 (QQVLTQNRGRKSKDRPAEKKEKKKPEGTV). A compositionally biased stretch (basic and acidic residues) spans 108–120 (DRPAEKKEKKKPE).

Belongs to the AROS family. In terms of assembly, part of the small subunit (SSU) processome, composed of more than 70 proteins and the RNA chaperone small nucleolar RNA (snoRNA) U3.

The protein localises to the nucleus. It is found in the nucleolus. Functionally, part of the small subunit (SSU) processome, first precursor of the small eukaryotic ribosomal subunit. During the assembly of the SSU processome in the nucleolus, many ribosome biogenesis factors, an RNA chaperone and ribosomal proteins associate with the nascent pre-rRNA and work in concert to generate RNA folding, modifications, rearrangements and cleavage as well as targeted degradation of pre-ribosomal RNA by the RNA exosome. Acts as a chaperone that specifically mediates the integration of RPS19 in state post-A1. Direct regulator of SIRT1. The chain is Active regulator of SIRT1 (RPS19BP1) from Gallus gallus (Chicken).